Reading from the N-terminus, the 513-residue chain is Nucleolar GTP-binding protein 2 (513 aa).

The segment at 1-23 (MGTGKKEKQRRIREGNTKDGNLR) is disordered. Residues 211–372 (WNELYKVIDS…LIDCPGIVPP (162 aa)) enclose the CP-type G domain. Residues 321-328 (GYPNTGKS) and 365-369 (DCPGI) contribute to the GTP site. The disordered stretch occupies residues 459–513 (GKIPWFVPPPEKDKIEEKEPGDKKRPAEENQEDQEEEEKEQEEQEEPVSKKAKKE). The segment covering 468-486 (PEKDKIEEKEPGDKKRPAE) has biased composition (basic and acidic residues). Positions 487–504 (ENQEDQEEEEKEQEEQEE) are enriched in acidic residues.

The protein belongs to the TRAFAC class YlqF/YawG GTPase family. NOG2 subfamily.

The protein resides in the nucleus. The protein localises to the nucleolus. In terms of biological role, GTPase that associates with pre-60S ribosomal subunits in the nucleolus and is required for their nuclear export and maturation. The polypeptide is Nucleolar GTP-binding protein 2 (NOG2) (Kluyveromyces lactis (strain ATCC 8585 / CBS 2359 / DSM 70799 / NBRC 1267 / NRRL Y-1140 / WM37) (Yeast)).